The primary structure comprises 193 residues: Probable 3' cyclic ADP-D-ribose synthase ThsB' (193 aa).

In terms of assembly, homodimer.

It catalyses the reaction NAD(+) = 3'cADPR + nicotinamide + H(+). In terms of biological role, TIR-like domain-containing component of the Thoeris antiviral defense system, composed of ThsA and ThsB and ThsB'. In the presence of NAD(+) produces a signaling molecule that activates cognate ThsA (AC J8G6Z1) to hydrolyze NAD(+). The signaling molecule is a cyclic ADP-D-ribose isomer and may be 3' cyclic ADP-D-ribose (3'cADPR); it is not 2'cADPR. This chain is Probable 3' cyclic ADP-D-ribose synthase ThsB', found in Bacillus cereus (strain MSX-D12).